Reading from the N-terminus, the 709-residue chain is Phosphoribosylformylglycinamidine synthase subunit PurL (709 aa).

His-36 is a catalytic residue. The ATP site is built by Tyr-39 and Lys-80. Glu-82 serves as a coordination point for Mg(2+). Residues 83-86 and Arg-105 contribute to the substrate site; that span reads SHNH. His-84 serves as the catalytic Proton acceptor. Asp-106 contacts Mg(2+). Gln-226 contacts substrate. Asp-252 contacts Mg(2+). 294-296 is a binding site for substrate; it reads ETQ. Asp-470 and Gly-507 together coordinate ATP. Residue Ser-510 participates in substrate binding.

This sequence belongs to the FGAMS family. As to quaternary structure, monomer. Part of the FGAM synthase complex composed of 1 PurL, 1 PurQ and 2 PurS subunits.

It localises to the cytoplasm. It carries out the reaction N(2)-formyl-N(1)-(5-phospho-beta-D-ribosyl)glycinamide + L-glutamine + ATP + H2O = 2-formamido-N(1)-(5-O-phospho-beta-D-ribosyl)acetamidine + L-glutamate + ADP + phosphate + H(+). It functions in the pathway purine metabolism; IMP biosynthesis via de novo pathway; 5-amino-1-(5-phospho-D-ribosyl)imidazole from N(2)-formyl-N(1)-(5-phospho-D-ribosyl)glycinamide: step 1/2. Part of the phosphoribosylformylglycinamidine synthase complex involved in the purines biosynthetic pathway. Catalyzes the ATP-dependent conversion of formylglycinamide ribonucleotide (FGAR) and glutamine to yield formylglycinamidine ribonucleotide (FGAM) and glutamate. The FGAM synthase complex is composed of three subunits. PurQ produces an ammonia molecule by converting glutamine to glutamate. PurL transfers the ammonia molecule to FGAR to form FGAM in an ATP-dependent manner. PurS interacts with PurQ and PurL and is thought to assist in the transfer of the ammonia molecule from PurQ to PurL. The polypeptide is Phosphoribosylformylglycinamidine synthase subunit PurL (Saccharolobus solfataricus (strain ATCC 35092 / DSM 1617 / JCM 11322 / P2) (Sulfolobus solfataricus)).